We begin with the raw amino-acid sequence, 2873 residues long: Fibrillin-1 (2873 aa).

Residues 1 to 24 form the signal peptide; the sequence is MRRGGLLEVALAFALLLESYTSHG. Residues 25 to 44 constitute a propeptide that is removed on maturation; it reads ADANLEAGSLKETRANRAKR. The fibrillin unique N-terminal (FUN) domain stretch occupies residues 45–81; that stretch reads RGGGGHDALKGPNVCGSRYNAYCCPGWKTLPGGNQCI. The segment at 45-452 is N-terminal domain; the sequence is RGGGGHDALK…PPRVLPFNVT (408 aa). Disulfide bonds link Cys-59-Cys-68, Cys-67-Cys-80, Cys-85-Cys-94, Cys-89-Cys-100, Cys-102-Cys-111, Cys-119-Cys-129, Cys-123-Cys-134, Cys-136-Cys-145, Cys-150-Cys-160, Cys-154-Cys-166, and Cys-168-Cys-177. 3 EGF-like domains span residues 81-112, 115-146, and 147-178; these read IVPICRHSCGDGFCSRPNMCTCPSGQISPSCG, SIQHCSIRCMNGGSCSDDHCLCQKGYIGTHCG, and QPVCESGCLNGGRCVAPNRCACTYGFTGPQCE. Positions 119–329 are interaction with MFAP4; sequence CSIRCMNGGS…YTSPDGTRCV (211 aa). The TB 1 domain occupies 184 to 236; the sequence is GPCFTVVSNQMCQGQLSGIVCTKTLCCATVGRAWGHPCEMCPAQPHPCRRGFI. A hybrid domain 1 region spans residues 195 to 221; sequence CQGQLSGIVCTKTLCCATVGRAWGHPC. An EGF-like 4; calcium-binding domain is found at 246–287; that stretch reads DVDECQAIPGMCQGGNCINTVGSFECKCPAGHKFNEVSQKCE. Intrachain disulfides connect Cys-250–Cys-262, Cys-257–Cys-271, Cys-273–Cys-286, Cys-292–Cys-304, Cys-299–Cys-313, and Cys-315–Cys-328. O-linked (Glc) serine glycosylation occurs at Ser-268. The EGF-like 5; calcium-binding domain occupies 288 to 329; sequence DIDECSTIPGVCDGGECTNTVSSYFCKCPPGFYTSPDGTRCV. Positions 334–389 constitute a TB 2 domain; the sequence is GYCYTALANGRCSNQLPQSITKMQCCCDLGRCWSPGVTVAPEMCPIRSTEDFNKLC. Asn-450 carries an N-linked (GlcNAc...) asparagine glycan. Residues 451–491 enclose the EGF-like 6 domain; sequence VTDYCQLVRYLCQNGRCIPTPGSYRCECNKGFQLDIRGECI. Intrachain disulfides connect Cys-455/Cys-467, Cys-462/Cys-476, Cys-478/Cys-490, Cys-496/Cys-506, Cys-501/Cys-515, Cys-517/Cys-530, Cys-536/Cys-548, Cys-543/Cys-557, Cys-559/Cys-572, Cys-578/Cys-589, Cys-584/Cys-598, Cys-600/Cys-613, Cys-619/Cys-630, Cys-625/Cys-639, and Cys-641/Cys-654. A glycan (O-linked (Glc) serine) is linked at Ser-473. One can recognise an EGF-like 7; calcium-binding domain in the interval 492–531; sequence DVDECEKNPCTGGECINNQGSYTCHCRAGYQSTLTRTECR. Ser-512 carries O-linked (Glc) serine glycosylation. An EGF-like 8; calcium-binding domain is found at 532 to 573; that stretch reads DIDECLQNGRICNNGRCINTDGSFHCVCNAGFHVTRDGKNCE. The region spanning 574–614 is the EGF-like 9; calcium-binding domain; that stretch reads DMDECSIRNMCLNGMCINEDGSFKCICKPGFQLASDGRYCK. One can recognise an EGF-like 10; calcium-binding domain in the interval 615 to 655; it reads DINECETPGICMNGRCVNTDGSYRCECFPGLAVGLDGRVCV. Residues 661–713 form the TB 3 domain; it reads STCYGGYRRGQCVKPLFGAVTKSECCCASTEYAFGEPCQPCPAQNSAEYQALC. Residues 725-766 form the EGF-like 11; calcium-binding domain; that stretch reads DINECALDPDICPNGICENLRGTYKCICNSGYEVDITGKNCV. Disulfide bonds link Cys-729–Cys-741, Cys-736–Cys-750, Cys-752–Cys-765, Cys-771–Cys-783, Cys-778–Cys-792, Cys-794–Cys-807, Cys-813–Cys-823, Cys-818–Cys-832, Cys-834–Cys-847, Cys-855–Cys-877, Cys-864–Cys-889, Cys-878–Cys-892, Cys-898–Cys-910, Cys-916–Cys-928, Cys-923–Cys-937, and Cys-939–Cys-952. The EGF-like 12; calcium-binding domain occupies 767–808; sequence DINECVLNSLLCDNGQCRNTPGSFVCTCPKGFVYKPDLKTCE. An EGF-like 13; calcium-binding domain is found at 809–848; that stretch reads DIDECESSPCINGVCKNSPGSFICECSPESTLDPTKTICI. Residues 853–904 form the TB 4 domain; that stretch reads GTCWQTVIDGRCEININGATLKSECCSSLGAAWGSPCTICQLDPICGKGFSR. Residues 862 to 887 form a hybrid domain 2 region; sequence GRCEININGATLKSECCSSLGAAWGS. Residues 912–953 enclose the EGF-like 14; calcium-binding domain; it reads DINECEVFPGVCKNGLCVNSRGSFKCECPNGMTLDATGRICL. The TB 5 domain occupies 958–1010; it reads ETCFLKYDDEECTLPIAGRHRMDACCCSVGAAWGTEECEECPLRNSREYEELC. Positions 1030–1071 constitute an EGF-like 15; calcium-binding domain; it reads DINECKMIPSLCTHGKCRNTIGSFKCRCDSGFALDSEERNCT. Intrachain disulfides connect Cys-1034–Cys-1046, Cys-1041–Cys-1055, Cys-1057–Cys-1070, Cys-1076–Cys-1088, Cys-1083–Cys-1097, Cys-1099–Cys-1113, Cys-1119–Cys-1131, Cys-1126–Cys-1140, Cys-1142–Cys-1155, Cys-1161–Cys-1173, Cys-1168–Cys-1182, Cys-1184–Cys-1197, Cys-1203–Cys-1214, Cys-1210–Cys-1223, Cys-1225–Cys-1238, Cys-1244–Cys-1256, Cys-1251–Cys-1265, Cys-1267–Cys-1280, Cys-1286–Cys-1298, Cys-1293–Cys-1307, Cys-1309–Cys-1322, Cys-1328–Cys-1341, Cys-1335–Cys-1350, Cys-1352–Cys-1363, Cys-1369–Cys-1382, Cys-1376–Cys-1391, Cys-1393–Cys-1404, Cys-1410–Cys-1422, Cys-1417–Cys-1431, Cys-1433–Cys-1446, Cys-1452–Cys-1463, Cys-1458–Cys-1472, Cys-1474–Cys-1487, Cys-1493–Cys-1504, Cys-1499–Cys-1513, Cys-1515–Cys-1528, Cys-1536–Cys-1564, Cys-1551–Cys-1576, Cys-1565–Cys-1579, Cys-1566–Cys-1591, Cys-1612–Cys-1624, Cys-1619–Cys-1633, Cys-1635–Cys-1648, Cys-1654–Cys-1665, Cys-1660–Cys-1674, and Cys-1676–Cys-1689. Asn-1069 carries an N-linked (GlcNAc...) asparagine glycan. In terms of domain architecture, EGF-like 16; calcium-binding spans 1072 to 1114; the sequence is DIDECRISPDLCGRGQCVNTPGDFECKCDEGYESGFMMMKNCM. In terms of domain architecture, EGF-like 17; calcium-binding spans 1115-1156; that stretch reads DIDECQRDPLLCRGGICHNTEGSYRCECPPGHQLSPNISACI. The O-linked (Glc) serine glycan is linked to Ser-1137. Asn-1151 is a glycosylation site (N-linked (GlcNAc...) asparagine). An EGF-like 18; calcium-binding domain is found at 1157-1198; that stretch reads DINECELSANLCPHGRCVNLIGKYQCACNPGYHPTHDRLFCV. In terms of domain architecture, EGF-like 19; calcium-binding spans 1199–1239; the sequence is DIDECSIMNGGCETFCTNSDGSYECSCQPGFALMPDQRSCT. A glycan (O-linked (Glc) serine) is linked at Ser-1220. The region spanning 1240–1281 is the EGF-like 20; calcium-binding domain; sequence DIDECEDNPNICDGGQCTNIPGEYRCLCYDGFMASEDMKTCV. An EGF-like 21; calcium-binding domain is found at 1282–1323; it reads DVNECDLNPNICLSGTCENTKGSFICHCDMGYSGKKGKTGCT. O-linked (Glc) serine glycosylation occurs at Ser-1304. An EGF-like 22; calcium-binding domain is found at 1324–1364; it reads DINECEIGAHNCGRHAVCTNTAGSFKCSCSPGWIGDGIKCT. Ser-1347 carries O-linked (Glc) serine glycosylation. The EGF-like 23; calcium-binding domain occupies 1365-1405; the sequence is DLDECSNGTHMCSQHADCKNTMGSYRCLCKDGYTGDGFTCT. N-linked (GlcNAc...) asparagine glycosylation occurs at Asn-1371. An O-linked (Glc) serine glycan is attached at Ser-1388. The EGF-like 24; calcium-binding domain maps to 1406–1447; it reads DLDECSENLNLCGNGQCLNAPGGYRCECDMGFVPSADGKACE. The 41-residue stretch at 1448–1488 folds into the EGF-like 25; calcium-binding domain; that stretch reads DIDECSLPNICVFGTCHNLPGLFRCECEIGYELDRSGGNCT. The N-linked (GlcNAc...) asparagine glycan is linked to Asn-1486. The EGF-like 26; calcium-binding domain occupies 1489-1529; sequence DVNECLDPTTCISGNCVNTPGSYTCDCPPDFELNPTRVGCV. Ser-1510 is a glycosylation site (O-linked (Glc) serine). A C-terminal domain region spans residues 1530-2733; sequence DTRSGNCYLD…GYPKRGRKRR (1204 aa). In terms of domain architecture, TB 6 spans 1534-1591; that stretch reads GNCYLDIRPRGDNGDTACSNEIGVGVSKASCCCSLGKAWGTPCELCPSVNTSEYKILC. A Cell attachment site motif is present at residues 1543 to 1545; it reads RGD. The N-linked (GlcNAc...) asparagine glycan is linked to Asn-1583. The region spanning 1608–1649 is the EGF-like 27; calcium-binding domain; sequence DIDECQELPGLCQGGKCINTFGSFQCRCPTGYYLNEDTRVCD. An O-linked (Glc) serine glycan is attached at Ser-1630. In terms of domain architecture, EGF-like 28; calcium-binding spans 1650–1690; sequence DVNECETPGICGPGTCYNTVGNYTCICPPDYMQVNGGNNCM. Asn-1671 carries an N-linked (GlcNAc...) asparagine glycan. A TB 7 domain is found at 1695–1750; it reads SLCYRNYYADNQTCDGELLFNMTKKMCCCSYNIGRAWNKPCEQCPIPSTDEFATLC. N-linked (GlcNAc...) asparagine glycosylation is found at Asn-1705 and Asn-1715. The 42-residue stretch at 1768-1809 folds into the EGF-like 29; calcium-binding domain; sequence DIDECREIPGVCENGVCINMVGSFRCECPVGFFYNDKLLVCE. Cystine bridges form between Cys-1772-Cys-1784, Cys-1779-Cys-1793, Cys-1795-Cys-1808, Cys-1814-Cys-1826, Cys-1820-Cys-1835, Cys-1837-Cys-1849, Cys-1855-Cys-1867, Cys-1862-Cys-1876, Cys-1878-Cys-1891, Cys-1897-Cys-1907, Cys-1902-Cys-1916, Cys-1918-Cys-1930, Cys-1936-Cys-1949, Cys-1944-Cys-1958, Cys-1960-Cys-1973, Cys-1979-Cys-1991, Cys-1986-Cys-2000, Cys-2002-Cys-2013, Cys-2019-Cys-2031, Cys-2026-Cys-2040, Cys-2042-Cys-2055, Cys-2063-Cys-2085, Cys-2072-Cys-2098, Cys-2086-Cys-2101, Cys-2087-Cys-2113, Cys-2133-Cys-2144, Cys-2139-Cys-2153, Cys-2155-Cys-2166, Cys-2172-Cys-2183, Cys-2178-Cys-2192, Cys-2194-Cys-2206, Cys-2212-Cys-2223, Cys-2219-Cys-2232, Cys-2234-Cys-2247, Cys-2253-Cys-2267, Cys-2260-Cys-2276, Cys-2278-Cys-2291, Cys-2297-Cys-2309, Cys-2304-Cys-2318, and Cys-2320-Cys-2333. The EGF-like 30; calcium-binding domain occupies 1810–1850; sequence DIDECQNGPVCQRNAECINTAGSYRCDCKPGYRLTSTGQCN. An O-linked (Glc) serine glycan is attached at Ser-1832. In terms of domain architecture, EGF-like 31; calcium-binding spans 1851 to 1892; the sequence is DRNECQEIPNICSHGQCIDTVGSFYCLCHTGFKTNVDQTMCL. Ser-1873 carries an O-linked (Glc) serine glycan. The 39-residue stretch at 1893–1931 folds into the EGF-like 32; calcium-binding domain; sequence DINECERDACGNGTCRNTIGSFNCRCNHGFILSHNNDCI. Asn-1904 carries an N-linked (GlcNAc...) asparagine glycan. An O-linked (Glc) serine glycan is attached at Ser-1913. An EGF-like 33; calcium-binding domain is found at 1932 to 1974; that stretch reads DVDECATGNGNLCRNGQCVNTVGSFQCRCNEGYEVAPDGRTCV. An O-linked (Glc) serine glycan is attached at Ser-1955. In terms of domain architecture, EGF-like 34; calcium-binding spans 1975 to 2014; it reads DINECVLDPGKCAPGTCQNLDGSYRCICPPGYSLQNDKCE. An EGF-like 35; calcium-binding domain is found at 2015 to 2056; sequence DIDECVEEPEICALGTCSNTEGSFKCLCPEGFSLSSTGRRCQ. Ser-2037 carries an O-linked (Glc) serine glycan. The region spanning 2061–2113 is the TB 8 domain; sequence SYCYAKFEGGKCSSPKSRNHSKQECCCALKGEGWGDPCELCPTEPDEAFRQIC. The N-linked (GlcNAc...) asparagine glycan is linked to Asn-2079. In terms of domain architecture, EGF-like 36; calcium-binding spans 2129 to 2167; it reads DMDECKEPDVCRHGQCINTDGSYRCECPFGYILEGNECV. A glycan (O-linked (Glc) serine) is linked at Ser-2150. The EGF-like 37; calcium-binding domain maps to 2168–2207; the sequence is DTDECSVGNPCGNGTCKNVIGGFECTCEEGFEPGPMMTCE. An N-linked (GlcNAc...) asparagine glycan is attached at Asn-2180. An EGF-like 38; calcium-binding domain is found at 2208–2248; the sequence is DINECAQNPLLCAFRCVNTYGSYECKCPVGYVLREDRRMCK. The O-linked (Glc) serine glycan is linked to Ser-2229. Residues 2249–2292 enclose the EGF-like 39; calcium-binding domain; the sequence is DEDECAEGKHDCTEKQMECKNLIGTYMCICGPGYQRRPDGEGCI. One can recognise an EGF-like 40; calcium-binding domain in the interval 2293-2334; sequence DENECQTKPGICENGRCLNTLGSYTCECNDGFTASPTQDECL. Ser-2315 carries O-linked (Glc) serine glycosylation. The 54-residue stretch at 2339–2392 folds into the TB 9 domain; it reads GYCFSEVLQNMCQIGSSNRNPVTKSECCCDGGRGWGPHCEICPFEGTVAYKKLC. In terms of domain architecture, EGF-like 41; calcium-binding spans 2404–2445; sequence DIDECKVIHDVCRNGECVNDRGSYHCICKTGYTPDITGTACV. Cystine bridges form between Cys-2408-Cys-2420, Cys-2415-Cys-2429, Cys-2431-Cys-2444, Cys-2450-Cys-2461, Cys-2457-Cys-2470, Cys-2472-Cys-2485, Cys-2491-Cys-2502, Cys-2498-Cys-2511, Cys-2513-Cys-2524, Cys-2530-Cys-2543, Cys-2537-Cys-2552, Cys-2554-Cys-2567, Cys-2573-Cys-2583, Cys-2579-Cys-2592, Cys-2594-Cys-2607, Cys-2613-Cys-2624, Cys-2619-Cys-2633, Cys-2635-Cys-2648, Cys-2654-Cys-2665, Cys-2661-Cys-2674, and Cys-2676-Cys-2688. Positions 2446 to 2486 constitute an EGF-like 42; calcium-binding domain; the sequence is DLNECNQAPKPCNFICKNTEGSYQCSCPKGYILQEDGRSCK. A glycan (O-linked (Glc) serine) is linked at Ser-2467. The 39-residue stretch at 2487 to 2525 folds into the EGF-like 43; calcium-binding domain; it reads DLDECATKQHNCQFLCVNTIGGFTCKCPPGFTQHHTACI. Positions 2526–2568 constitute an EGF-like 44; calcium-binding domain; the sequence is DNNECTSDINLCGSKGVCQNTPGSFTCECQRGFSLDQSGASCE. Residue Ser-2549 is glycosylated (O-linked (Glc) serine). Residues 2569–2608 enclose the EGF-like 45; calcium-binding domain; sequence DVDECEGNHRCQHGCQNIIGGYRCSCPQGYLQHYQWNQCV. In terms of domain architecture, EGF-like 46; calcium-binding spans 2609–2649; it reads DENECLSAHVCGGASCHNTLGSYKCMCPTGFQYEQFSGGCQ. Residue Ser-2630 is glycosylated (O-linked (Glc) serine). Residues 2650-2689 form the EGF-like 47; calcium-binding domain; it reads DINECGSSQAPCSYGCSNTEGGYLCGCPPGYFRIGQGHCV. Phosphoserine occurs at positions 2704, 2705, and 2711. The segment at 2728-2747 is disordered; that stretch reads RGRKRRSTNETDASDIQDGS. 3 N-linked (GlcNAc...) asparagine glycosylation sites follow: Asn-2736, Asn-2752, and Asn-2769.

The protein belongs to the fibrillin family. Interacts with COL16A1. Interacts with integrin alpha-V/beta-3. Interacts with ADAMTS10; this interaction promotes microfibril assembly. Interacts with THSD4; this interaction promotes fibril formation. Interacts (via N-terminal domain) with FBLN2 and FBLN5. Interacts with ELN. Forms a ternary complex with ELN and FBLN2 or FBLN5 and a significant interaction with ELN seen only in the presence of FBLN2 or FBLN5. Interacts (via N-terminal domain) with LTBP2 (via C-terminal domain) in a Ca(+2)-dependent manner. Interacts (via N-terminal domain) with LTBP1 (via C-terminal domain). Interacts with integrins ITGA5:ITGB1, ITGAV:ITGB3 and ITGAV:ITGB6. Interacts (via N-terminal domain) with BMP2, BMP4, BMP7, BMP10 and GDF5. Interacts (via N-terminal domain) with MFAP2 and MFAP5. Interacts with ADAMTSL5. Interacts with MFAP4. Interacts (via N-terminal domain) with TNFSF11 in a Ca(+2)-dependent manner. Interacts (via N-terminal domain) with EFEMP2; this interaction inhibits EFEMP2 binding to LOX and ELN. In terms of processing, cleavage of N- and C-terminus by furin is required for incorporation into the extracellular matrix and assembly into microfibrils. The C-terminus, which corresponds to the Asprosin chain, was initially thought to constitute a propeptide. Fibrillin-1 and Asprosin chains are still linked together during the secretion from cells, but are subsequently separated by furin, an essential step for incorporation of Fibrillin-1 into the nascent microfibrils. Forms intermolecular disulfide bonds either with other fibrillin-1 molecules or with other components of the microfibrils. Post-translationally, O-glycosylated on serine residues by POGLUT2 and POGLUT3 which is necessary for efficient protein secretion. Strongly expressed during the first week of osteoblast differentiation. In terms of tissue distribution, secreted by white adipose tissue (at protein level).

The protein localises to the secreted. It localises to the extracellular space. The protein resides in the extracellular matrix. In terms of biological role, structural component of the 10-12 nm diameter microfibrils of the extracellular matrix, which conveys both structural and regulatory properties to load-bearing connective tissues. Fibrillin-1-containing microfibrils provide long-term force bearing structural support. In tissues such as the lung, blood vessels and skin, microfibrils form the periphery of the elastic fiber, acting as a scaffold for the deposition of elastin. In addition, microfibrils can occur as elastin-independent networks in tissues such as the ciliary zonule, tendon, cornea and glomerulus where they provide tensile strength and have anchoring roles. Fibrillin-1 also plays a key role in tissue homeostasis through specific interactions with growth factors, such as the bone morphogenetic proteins (BMPs), growth and differentiation factors (GDFs) and latent transforming growth factor-beta-binding proteins (LTBPs), cell-surface integrins and other extracellular matrix protein and proteoglycan components. Regulates osteoblast maturation by controlling TGF-beta bioavailability and calibrating TGF-beta and BMP levels, respectively. Negatively regulates osteoclastogenesis by binding and sequestering an osteoclast differentiation and activation factor TNFSF11. This leads to disruption of TNFSF11-induced Ca(2+) signaling and impairment of TNFSF11-mediated nuclear translocation and activation of transcription factor NFATC1 which regulates genes important for osteoclast differentiation and function. Mediates cell adhesion via its binding to cell surface receptors integrins ITGAV:ITGB3 and ITGA5:ITGB1. Binds heparin and this interaction plays an important role in the assembly of microfibrils. Its function is as follows. Adipokine secreted by white adipose tissue that plays an important regulatory role in the glucose metabolism of liver, muscle and pancreas. Hormone that targets the liver in response to fasting to increase plasma glucose levels. Binds the olfactory receptor Olfr734 at the surface of hepatocytes and promotes hepatocyte glucose release by activating the protein kinase A activity in the liver, resulting in rapid glucose release into the circulation. May act as a regulator of adaptive thermogenesis by inhibiting browning and energy consumption, while increasing lipid deposition in white adipose tissue. Also acts as an orexigenic hormone that increases appetite: crosses the blood brain barrier and exerts effects on the hypothalamus. In the arcuate nucleus of the hypothalamus, asprosin directly activates orexigenic AgRP neurons and indirectly inhibits anorexigenic POMC neurons, resulting in appetite stimulation. Activates orexigenic AgRP neurons via binding to the olfactory receptor Olfr734. May also play a role in sperm motility in testis via interaction with Olfr734 receptor. The chain is Fibrillin-1 from Mus musculus (Mouse).